The primary structure comprises 517 residues: Aldehyde dehydrogenase X, mitochondrial (517 aa).

Residues 1–17 constitute a mitochondrion transit peptide; that stretch reads MLRFLAPRLLSLQGRTA. K51 bears the N6-acetyllysine mark. K52 is subject to N6-acetyllysine; alternate. The residue at position 52 (K52) is an N6-succinyllysine; alternate. K81 carries the post-translational modification N6-succinyllysine. 262–267 lines the NAD(+) pocket; that stretch reads GSTEVG. The active-site Proton acceptor is the E285. The Nucleophile role is filled by C319. 5 positions are modified to N6-acetyllysine; alternate: K364, K383, K399, K414, and K426. K364, K383, K399, K414, and K426 each carry N6-succinyllysine; alternate. K429 carries the post-translational modification N6-acetyllysine.

This sequence belongs to the aldehyde dehydrogenase family. Homotetramer. Liver, testis and to a lesser extent in brain.

Its subcellular location is the mitochondrion matrix. It catalyses the reaction an aldehyde + NAD(+) + H2O = a carboxylate + NADH + 2 H(+). The protein operates within alcohol metabolism; ethanol degradation; acetate from ethanol: step 2/2. Its function is as follows. ALDHs play a major role in the detoxification of alcohol-derived acetaldehyde. They are involved in the metabolism of corticosteroids, biogenic amines, neurotransmitters, and lipid peroxidation. In Homo sapiens (Human), this protein is Aldehyde dehydrogenase X, mitochondrial (ALDH1B1).